Reading from the N-terminus, the 412-residue chain is Multifunctional CCA protein (412 aa).

Glycine 8 and arginine 11 together coordinate ATP. Residues glycine 8 and arginine 11 each contribute to the CTP site. Residues aspartate 21 and aspartate 23 each coordinate Mg(2+). Residues arginine 91, arginine 137, and arginine 140 each contribute to the ATP site. Arginine 91, arginine 137, and arginine 140 together coordinate CTP. The region spanning 228-329 (TGIHTLMTLS…VKLFDSIDAW (102 aa)) is the HD domain.

The protein belongs to the tRNA nucleotidyltransferase/poly(A) polymerase family. Bacterial CCA-adding enzyme type 1 subfamily. Monomer. Can also form homodimers and oligomers. Requires Mg(2+) as cofactor. Ni(2+) is required as a cofactor.

The catalysed reaction is a tRNA precursor + 2 CTP + ATP = a tRNA with a 3' CCA end + 3 diphosphate. It catalyses the reaction a tRNA with a 3' CCA end + 2 CTP + ATP = a tRNA with a 3' CCACCA end + 3 diphosphate. Catalyzes the addition and repair of the essential 3'-terminal CCA sequence in tRNAs without using a nucleic acid template. Adds these three nucleotides in the order of C, C, and A to the tRNA nucleotide-73, using CTP and ATP as substrates and producing inorganic pyrophosphate. tRNA 3'-terminal CCA addition is required both for tRNA processing and repair. Also involved in tRNA surveillance by mediating tandem CCA addition to generate a CCACCA at the 3' terminus of unstable tRNAs. While stable tRNAs receive only 3'-terminal CCA, unstable tRNAs are marked with CCACCA and rapidly degraded. This is Multifunctional CCA protein from Escherichia coli O8 (strain IAI1).